The following is a 72-amino-acid chain: MKAGIHPEYKAVNATCSCGNSFVFNSTLGKDTMHLDVCDKCHPFYSGKQRIVDTGGRVERFNKRFGALSAKK.

Residues cysteine 16, cysteine 18, cysteine 38, and cysteine 41 each coordinate Zn(2+).

The protein belongs to the bacterial ribosomal protein bL31 family. Type A subfamily. As to quaternary structure, part of the 50S ribosomal subunit. Zn(2+) serves as cofactor.

In terms of biological role, binds the 23S rRNA. The sequence is that of Large ribosomal subunit protein bL31 from Vibrio cholerae serotype O1 (strain ATCC 39541 / Classical Ogawa 395 / O395).